A 517-amino-acid polypeptide reads, in one-letter code: Apolipoprotein N-acyltransferase (517 aa).

7 consecutive transmembrane segments (helical) span residues 5 to 25 (SFFS…ATLT), 26 to 46 (FAPY…LWLL), 55 to 75 (GLIG…WVHV), 90 to 110 (FLMS…GALF), 128 to 148 (VIWL…PWLW), 162 to 182 (APIL…GALV), and 193 to 213 (LMVP…SWVV). The region spanning 225 to 471 (IQGNVPQELK…TAVLRATITP (247 aa)) is the CN hydrolase domain. Catalysis depends on Glu264, which acts as the Proton acceptor. The active site involves Lys330. The Nucleophile role is filled by Cys382.

It belongs to the CN hydrolase family. Apolipoprotein N-acyltransferase subfamily.

Its subcellular location is the cell inner membrane. The catalysed reaction is N-terminal S-1,2-diacyl-sn-glyceryl-L-cysteinyl-[lipoprotein] + a glycerophospholipid = N-acyl-S-1,2-diacyl-sn-glyceryl-L-cysteinyl-[lipoprotein] + a 2-acyl-sn-glycero-3-phospholipid + H(+). Its pathway is protein modification; lipoprotein biosynthesis (N-acyl transfer). Catalyzes the phospholipid dependent N-acylation of the N-terminal cysteine of apolipoprotein, the last step in lipoprotein maturation. The sequence is that of Apolipoprotein N-acyltransferase from Photobacterium profundum (strain SS9).